Consider the following 540-residue polypeptide: MTVMEHKKAALLDLTQYGLTGVTDVLRNPSYEQLFEEETRPDLEGYERGVMTELGSVAVDTGIFTGRSPKDKYIVKDNTTKDTLWWSDQGKNDNKAITPAVWDDLRSLVTTQLSGKRLFVIDGFCGANPDTRLNVRIITEVAWQAHFVKNMFIRPTEAELENFEPDFVVMNGAKATNPNYEKHGLNSENFVAFNLTERVQIIGGTWYGGEMKKGMFAMMNYLLPLKGIASMHCSANVGEKGDVAVFFGLSGTGKTTLSTDPKRQLIGDDEHGWDDDGIFNFEGGCYAKTIRLSKEAEPDIYNAIRRDALLENVTVRSDSSIDFNDGSKTENTRVSYPIYHIDNIVKPVSKAGHAKKVIFLTADAFGVLPPVAKLTPEQTKYHFLSGFTAKLAGTERGITEPTPTFSAAFGAAFLTLHPTQYAEVLVKRMEAAGAEAYIVNTGWNGTGKRISIQDTRGIIDAILDGSIDQAKTKNIPVFNLEVPTSLPGVDASILDPRDTYTDPLQWDSKAEDLAQRFIKNFAQYTDNEEGKALVKAGPQL.

Substrate is bound by residues Arg67, Tyr207, and Lys213. ATP contacts are provided by residues Lys213, His232, and 248–256 (GLSGTGKTT). Mn(2+)-binding residues include Lys213 and His232. Asp269 contributes to the Mn(2+) binding site. ATP is bound by residues Glu297, Arg333, 449–450 (RI), and Thr455. Arg333 contributes to the substrate binding site.

It belongs to the phosphoenolpyruvate carboxykinase (ATP) family. In terms of assembly, monomer. Mn(2+) serves as cofactor.

The protein localises to the cytoplasm. It carries out the reaction oxaloacetate + ATP = phosphoenolpyruvate + ADP + CO2. It participates in carbohydrate biosynthesis; gluconeogenesis. Its function is as follows. Involved in the gluconeogenesis. Catalyzes the conversion of oxaloacetate (OAA) to phosphoenolpyruvate (PEP) through direct phosphoryl transfer between the nucleoside triphosphate and OAA. This chain is Phosphoenolpyruvate carboxykinase (ATP), found in Aliivibrio fischeri (strain MJ11) (Vibrio fischeri).